The chain runs to 127 residues: Small ribosomal subunit protein uS13 (127 aa).

Residues H92–K127 form a disordered region. Positions Q101 to K127 are enriched in basic residues.

Belongs to the universal ribosomal protein uS13 family. As to quaternary structure, part of the 30S ribosomal subunit. Forms a loose heterodimer with protein S19. Forms two bridges to the 50S subunit in the 70S ribosome.

In terms of biological role, located at the top of the head of the 30S subunit, it contacts several helices of the 16S rRNA. In the 70S ribosome it contacts the 23S rRNA (bridge B1a) and protein L5 of the 50S subunit (bridge B1b), connecting the 2 subunits; these bridges are implicated in subunit movement. Contacts the tRNAs in the A and P-sites. This chain is Small ribosomal subunit protein uS13, found in Trichodesmium erythraeum (strain IMS101).